The sequence spans 1075 residues: Nuclear factor of activated T-cells, cytoplasmic 3 (1075 aa).

T2 is subject to N-acetylthreonine. The interval 18-37 (FGEDGAPAPPPPGSRPADLE) is disordered. The calcineurin-binding stretch occupies residues 109–114 (PSIQIT). Positions 205–306 (LGSPLTSPGG…PGHSPRGSVT (102 aa)) are disordered. Repeat copies occupy residues 207–223 (SPLT…PGEE) and 236–252 (SPRQ…VTDE). Residues 207–308 (SPLTSPGGSP…HSPRGSVTED (102 aa)) form a 3 X SP repeats region. Residues 236–253 (SPRQSPCHSPRSSVTDEN) are compositionally biased toward polar residues. Over residues 256-270 (SPRPASGPSSRPTSP) the composition is skewed to low complexity. Positions 273–275 (KRR) match the Nuclear localization signal motif. Copy 3 of the repeat occupies 292–308 (SPVPSPGHSPRGSVTED). Residues S344 and S372 each carry the phosphoserine modification. The region spanning 415 to 596 (SSLPPLDWPL…IPVECSQRSA (182 aa)) is the RHD domain. Residues 444–451 (RAHYETEG) mediate DNA binding. The Nuclear localization signal signature appears at 686 to 688 (KRK). Disordered regions lie at residues 711-739 (DLSS…SHDS) and 887-988 (SNTG…GLSA). Polar residues-rich tracts occupy residues 724–739 (AQTQ…SHDS) and 887–912 (SNTG…QLQP). Low complexity-rich tracts occupy residues 916-939 (GPSH…SSPL) and 949-967 (PMPY…SPAT). The segment covering 970–981 (HSGQHSTQAQST) has biased composition (polar residues). The Nuclear export signal motif lies at 1032 to 1041 (TLDDVNEIIG). The disordered stretch occupies residues 1049–1075 (VSQGAGVSRQAPLPSPESLDLGRSDGL). Residues S1063 and S1066 each carry the phosphoserine modification.

In terms of assembly, NFATC proteins bind to DNA as monomers. Member of the multicomponent NFATC transcription complex that consists of at least two components, a pre-existing cytoplasmic component NFATC2 and an inducible nuclear component NFATC1. Other members such as NFATC4, or members of the activating protein-1 family, MAF, GATA4 and Cbp/p300 can also bind the complex. Component of a promoter-binding complex composed of STAT3, NFATC3 and NFATC4; complex formation is enhanced by calcineurin. Interacts with TRIM17; this interaction prevents NFATC3 nuclear localization. Interacts with and ubiquitinated by STUB1/CHIP; HSPA1A/HSP70 is required as a co-chaperone. In terms of processing, ubiquitinated by STUB1/CHIP, leading to proteasomal degradation. Post-translationally, phosphorylated by NFATC-kinase; dephosphorylated by calcineurin. As to expression, predominantly expressed in thymus and is also found in peripheral blood leukocytes and kidney. In terms of tissue distribution, predominantly expressed in skeletal muscle. Also found weakly expressed in the thymus, kidney, testis, spleen, prostate, ovary, small intestine, heart, placenta and pancreas. Expressed in thymus and kidney. As to expression, expressed in thymus and skeletal muscle.

Its subcellular location is the cytoplasm. It localises to the nucleus. Functionally, acts as a regulator of transcriptional activation. Binds to the TNFSF11/RANKL promoter region and promotes TNFSF11 transcription. Binding to the TNFSF11 promoter region is increased by high levels of Ca(2+) which induce NFATC3 expression and may lead to regulation of TNFSF11 expression in osteoblasts. Plays a role in promoting mesenteric arterial wall remodeling in response to the intermittent hypoxia-induced increase in EDN1 and ROCK signaling. As a result NFATC3 colocalizes with F-actin filaments, translocates to the nucleus and promotes transcription of the smooth muscle hypertrophy and differentiation marker ACTA2. Promotes lipopolysaccharide-induced apoptosis and hypertrophy in cardiomyocytes. Following JAK/STAT signaling activation and as part of a complex with NFATC4 and STAT3, binds to the alpha-beta E4 promoter region of CRYAB and activates transcription in cardiomyocytes. In conjunction with NFATC4, involved in embryonic heart development via maintenance of cardiomyocyte survival, proliferation and differentiation. Plays a role in the inducible expression of cytokine genes in T-cells, especially in the induction of the IL-2. Required for thymocyte maturation during DN3 to DN4 transition and during positive selection. Positively regulates macrophage-derived polymicrobial clearance, via binding to the promoter region and promoting transcription of NOS2 resulting in subsequent generation of nitric oxide. Involved in Ca(2+)-mediated transcriptional responses upon Ca(2+) influx via ORAI1 CRAC channels. The sequence is that of Nuclear factor of activated T-cells, cytoplasmic 3 from Homo sapiens (Human).